A 586-amino-acid chain; its full sequence is Arginine--tRNA ligase (586 aa).

Residues 131–141 carry the 'HIGH' region motif; sequence ANPTGPMHVGH.

The protein belongs to the class-I aminoacyl-tRNA synthetase family. Monomer.

It is found in the cytoplasm. It catalyses the reaction tRNA(Arg) + L-arginine + ATP = L-arginyl-tRNA(Arg) + AMP + diphosphate. The polypeptide is Arginine--tRNA ligase (Rhizobium rhizogenes (strain K84 / ATCC BAA-868) (Agrobacterium radiobacter)).